Here is a 460-residue protein sequence, read N- to C-terminus: Proton extrusion protein PxcA (460 aa).

2 disordered regions span residues 82-128 (FSRL…QRRD) and 143-190 (SRYK…GSGN). Positions 90-102 (QNGSGPTSAQDKA) are enriched in polar residues. Low complexity predominate over residues 107–120 (AAEANVSESSSENS). Residues 151–163 (KSQPISASISTSP) show a composition bias toward polar residues. Low complexity predominate over residues 171 to 184 (QPTSTQPSSSNVSV). 4 helical membrane passes run 242 to 262 (FLLL…NFLF), 337 to 357 (GLKN…LIFV), 373 to 393 (IYGL…DVFV), and 420 to 440 (FIYG…KYWI).

This sequence belongs to the CemA family.

Its subcellular location is the cell inner membrane. Required for H(+) efflux immediately after light irradiation to form a rapid H(+) concentration gradient across the thylakoid membranes. Together with PxcL, contributes to transient H(+) uptake following dark to light transition. The protein is Proton extrusion protein PxcA of Synechococcus sp. (strain JA-2-3B'a(2-13)) (Cyanobacteria bacterium Yellowstone B-Prime).